A 229-amino-acid polypeptide reads, in one-letter code: MVHPYLFLQFFRKLLEPLHISEAGADAIAYTWLIIALLLILSMLATKGLKTVPGGLQNFMEVIIGGVENMVVETMGHHGKPFFPLIATLAIFILVSNLIGLVPGFFPPTANINTTAACAVIVFVTTHVVGIKEHGFKYIKHFLGPILWLAPMMFFIEVIGHFSRVISLTLRLFGNMNGHELVLMIFFGLAPFLVPLPMMLMGVLVSFIQAFVFMLLAMIYIQGSLEEGH.

Transmembrane regions (helical) follow at residues 25 to 45 (ADAI…SMLA), 82 to 102 (FFPL…IGLV), 104 to 124 (GFFP…IVFV), 142 to 162 (FLGP…IGHF), 181 to 201 (LVLM…MMLM), and 202 to 222 (GVLV…IYIQ).

The protein belongs to the ATPase A chain family. In terms of assembly, F-type ATPases have 2 components, CF(1) - the catalytic core - and CF(0) - the membrane proton channel. CF(1) has five subunits: alpha(3), beta(3), gamma(1), delta(1), epsilon(1). CF(0) has three main subunits: a(1), b(2) and c(9-12). The alpha and beta chains form an alternating ring which encloses part of the gamma chain. CF(1) is attached to CF(0) by a central stalk formed by the gamma and epsilon chains, while a peripheral stalk is formed by the delta and b chains.

Its subcellular location is the cell inner membrane. In terms of biological role, key component of the proton channel; it plays a direct role in the translocation of protons across the membrane. In Geotalea uraniireducens (strain Rf4) (Geobacter uraniireducens), this protein is ATP synthase subunit a.